A 1493-amino-acid chain; its full sequence is ABC transporter C family member 7 (1493 aa).

Transmembrane regions (helical) follow at residues 21 to 41 (FPMF…GSCV), 70 to 90 (VVIC…LSCF), 102 to 122 (LMIL…SFYI), 140 to 160 (VWWV…IALY), 165 to 185 (LVSV…LFLC), 309 to 329 (ILLS…APYL), 343 to 360 (YSNQ…AKLV), 423 to 443 (WYMH…LILY), 448 to 468 (LGSI…IPLA), and 535 to 555 (SVLW…CMLL). The ABC transmembrane type-1 1 domain occupies 309-590 (ILLSTLFAFV…LPDTISMIVQ (282 aa)). In terms of domain architecture, ABC transporter 1 spans 624–847 (VEVSNGAFSW…GTDFMELVGA (224 aa)). 659 to 666 (GTVGSGKS) lines the ATP pocket. Residues 863-898 (ASAQSTTSKESKVSNDEEKQEEDLPSPKGQLVQEEE) form a disordered region. S888 carries the post-translational modification Phosphoserine. The next 6 helical transmembrane spans lie at 915–935 (LAYG…FQVL), 959–979 (GSTL…CILV), 1038–1055 (FSNL…IGVM), 1059–1081 (AWQV…QYYI), 1153–1173 (LSTV…EGVI), and 1177–1197 (FAGL…TLIW). Residues 922 to 1204 (VPIILVVQIL…LIWTLCDLEN (283 aa)) form the ABC transmembrane type-1 2 domain. Residues 1241 to 1475 (ITICNLQVRY…KSSSFSKLVA (235 aa)) enclose the ABC transporter 2 domain. Residue 1275–1282 (GRTGCGKS) participates in ATP binding.

The protein belongs to the ABC transporter superfamily. ABCC family. Conjugate transporter (TC 3.A.1.208) subfamily. In terms of tissue distribution, ubiquitous.

It is found in the membrane. It catalyses the reaction ATP + H2O + xenobioticSide 1 = ADP + phosphate + xenobioticSide 2.. In terms of biological role, pump for glutathione S-conjugates. The sequence is that of ABC transporter C family member 7 (ABCC7) from Arabidopsis thaliana (Mouse-ear cress).